Consider the following 430-residue polypeptide: Sphingosine-1-phosphate phosphatase 1 (430 aa).

A disordered region spans residues 34–100; the sequence is GSPKAGEDAE…PRRAGSLRRN (67 aa). At S101 the chain carries Phosphoserine. T103 carries the phosphothreonine modification. 4 consecutive transmembrane segments (helical) span residues 121-141, 152-172, 193-213, and 216-236; these read FCFG…PFWI, LVII…IIRW, MPST…LLTY, and WQYP…LVCL. The segment at 167-175 is phosphatase sequence motif I; sequence KDIIRWPRP. Residues 194 to 197 are phosphatase sequence motif II; it reads PSTH. The active-site Proton donor is H197. Positions 237–248 are phosphatase sequence motif III; it reads SRIYMGMHSILD. H244 functions as the Nucleophile in the catalytic mechanism. Transmembrane regions (helical) follow at residues 246 to 266, 279 to 299, 311 to 331, 348 to 368, and 409 to 429; these read ILDV…FYPL, YAPL…FTLD, ILGS…LGIS, VTLF…VLFV, and YGTV…FIGI.

It belongs to the type 2 lipid phosphate phosphatase family.

The protein localises to the endoplasmic reticulum membrane. It localises to the cell membrane. The catalysed reaction is sphinganine 1-phosphate + H2O = sphinganine + phosphate. The enzyme catalyses sphing-4-enine 1-phosphate + H2O = sphing-4-enine + phosphate. Specifically dephosphorylates sphingosine 1-phosphate (S1P), dihydro-S1P, and phyto-S1P. Does not act on ceramide 1-phosphate, lysophosphatidic acid or phosphatidic acid. Sphingosine-1-phosphate phosphatase activity is needed for efficient recycling of sphingosine into the sphingolipid synthesis pathway. Regulates the intracellular levels of the bioactive sphingolipid metabolite S1P that regulates diverse biological processes acting both as an extracellular receptor ligand or as an intracellular second messenger. Involved in efficient ceramide synthesis from exogenous sphingoid bases. Converts S1P to sphingosine, which is readily metabolized to ceramide via ceramide synthase. In concert with sphingosine kinase 2 (SphK2), recycles sphingosine into ceramide through a phosphorylation/dephosphorylation cycle. Regulates endoplasmic-to-Golgi trafficking of ceramides, resulting in the regulation of ceramide levels in the endoplasmic reticulum, preferentially long-chain ceramide species, and influences the anterograde membrane transport of both ceramide and proteins from the endoplasmic reticulum to the Golgi apparatus. The modulation of intracellular ceramide levels in turn regulates apoptosis. Via S1P levels, modulates resting tone, intracellular Ca(2+) and myogenic vasoconstriction in resistance arteries. Also involved in unfolded protein response (UPR) and ER stress-induced autophagy via regulation of intracellular S1P levels. Involved in the regulation of epidermal homeostasis and keratinocyte differentiation. The sequence is that of Sphingosine-1-phosphate phosphatase 1 from Rattus norvegicus (Rat).